Consider the following 305-residue polypeptide: Tetraspanin-12 (305 aa).

Residues Met1–Cys12 are Cytoplasmic-facing. 2 S-palmitoyl cysteine lipidation sites follow: Cys9 and Cys12. The chain crosses the membrane as a helical span at residues Leu13–Ala33. Over Trp34 to Tyr59 the chain is Extracellular. A helical transmembrane segment spans residues Phe60–Leu80. At Gly81 to Asn89 the chain is on the cytoplasmic side. Cys83 carries the S-palmitoyl cysteine lipid modification. Residues Leu90–Cys110 form a helical membrane-spanning segment. Topologically, residues Gly111 to Arg224 are extracellular. A helical membrane pass occupies residues Phe225 to Leu245. At Trp246–Leu305 the chain is on the cytoplasmic side.

Belongs to the tetraspanin (TM4SF) family. In terms of assembly, component of a complex, at least composed of TSPAN12, FZD4 and norrin (NDP). In terms of processing, palmitoylated; required for interaction with ADAM10. The precise position of palmitoylated residues is unclear and occurs either on Cys-9, Cys-12 and/or Cys-83.

It localises to the cell membrane. In terms of biological role, regulator of cell surface receptor signal transduction. Plays a central role in retinal vascularization by regulating norrin (NDP) signal transduction. Acts in concert with norrin (NDP) to promote FZD4 multimerization and subsequent activation of FZD4, leading to promote accumulation of beta-catenin (CTNNB1) and stimulate LEF/TCF-mediated transcriptional programs. Suprisingly, it only activates the norrin (NDP)-dependent activation of FZD4, while it does not activate the Wnt-dependent activation of FZD4, suggesting the existence of a Wnt-independent signaling that also promote accumulation the beta-catenin (CTNNB1). This Gallus gallus (Chicken) protein is Tetraspanin-12 (TSPAN12).